We begin with the raw amino-acid sequence, 576 residues long: Arginine--tRNA ligase (576 aa).

A 'HIGH' region motif is present at residues 126-136 (ANPTGPMHIGH).

The protein belongs to the class-I aminoacyl-tRNA synthetase family. As to quaternary structure, monomer.

The protein resides in the cytoplasm. The enzyme catalyses tRNA(Arg) + L-arginine + ATP = L-arginyl-tRNA(Arg) + AMP + diphosphate. This is Arginine--tRNA ligase from Rickettsia akari (strain Hartford).